Reading from the N-terminus, the 158-residue chain is NKG2-F type II integral membrane protein (158 aa).

The span at 1-12 (MNKQRGTYSEVS) shows a compositional bias: polar residues. The tract at residues 1–25 (MNKQRGTYSEVSLAQDPKRQQRKLK) is disordered. Over 1-74 (MNKQRGTYSE…LPPPEKLTAE (74 aa)) the chain is Cytoplasmic. The helical; Signal-anchor for type II membrane protein transmembrane segment at 75 to 95 (VLGIICIVLMATVLKTIVLIP) threads the bilayer. At 96–158 (CIGVLEQNNF…VLRRTLICFL (63 aa)) the chain is on the extracellular side.

Can form disulfide-bonded heterodimer with CD94. Natural killer cells.

The protein localises to the membrane. Functionally, may play a role as a receptor for the recognition of MHC class I HLA-E molecules by NK cells. This chain is NKG2-F type II integral membrane protein (KLRC4), found in Homo sapiens (Human).